A 524-amino-acid chain; its full sequence is GMP synthase [glutamine-hydrolyzing] (524 aa).

The 191-residue stretch at 5–195 (KVIVIDFGGQ…VRGVCGCAGT (191 aa)) folds into the Glutamine amidotransferase type-1 domain. Cys-82 (nucleophile) is an active-site residue. Residues His-169 and Glu-171 contribute to the active site. One can recognise a GMPS ATP-PPase domain in the interval 196–389 (WKMDAFVENT…LGIPEHLVFR (194 aa)). ATP is bound at residue 223-229 (SGGVDSS).

In terms of assembly, homodimer.

The enzyme catalyses XMP + L-glutamine + ATP + H2O = GMP + L-glutamate + AMP + diphosphate + 2 H(+). Its pathway is purine metabolism; GMP biosynthesis; GMP from XMP (L-Gln route): step 1/1. Functionally, catalyzes the synthesis of GMP from XMP. The polypeptide is GMP synthase [glutamine-hydrolyzing] (Lachnospira eligens (strain ATCC 27750 / DSM 3376 / VPI C15-48 / C15-B4) (Eubacterium eligens)).